We begin with the raw amino-acid sequence, 1007 residues long: Glutamate receptor ionotropic, delta-2 (1007 aa).

The first 23 residues, 1–23, serve as a signal peptide directing secretion; it reads MEVFPLLFFLSFWWSRTWDLATS. The tract at residues 24–345 is interaction with CBLN1 homotrimer; it reads DSIIHIGAIF…NAFHKKLEDR (322 aa). Topologically, residues 24–566 are extracellular; that stretch reads DSIIHIGAIF…DMFACLAPFD (543 aa). Intrachain disulfides connect cysteine 83–cysteine 355, cysteine 99–cysteine 131, and cysteine 298–cysteine 310. A glycan (N-linked (GlcNAc...) asparagine) is linked at asparagine 293. Asparagine 426 carries N-linked (GlcNAc...) asparagine glycosylation. Residues 567-587 traverse the membrane as a helical segment; sequence LSLWACIAGTVLLVGLLVYLL. The Cytoplasmic segment spans residues 588–635; that stretch reads NWLNPPRLQMGSMTSTTLYNSMWFVYGSFVQQGGEVPYTTLATRMMMG. The helical transmembrane segment at 636–656 threads the bilayer; sequence AWWLFALIVISSYTANLAAFL. The Extracellular segment spans residues 657-830; that stretch reads TITRIESSIQ…QKGGALDIKS (174 aa). 2 N-linked (GlcNAc...) asparagine glycosylation sites follow: asparagine 713 and asparagine 716. A helical membrane pass occupies residues 831–851; sequence LAGVFCILAAGIVLSCLIAVL. At 852-1007 the chain is on the cytoplasmic side; that stretch reads ETWWSRRKGS…GNDPDRGTSI (156 aa). Position 883 is a phosphoserine (serine 883). Phosphothreonine is present on threonine 886. A Phosphoserine modification is found at serine 890. Positions 921-991 are interaction with AP4M1; that stretch reads DFRNTHITTT…MSSIPYQPTP (71 aa). The PDZ-binding signature appears at 1005–1007; the sequence is TSI. The residue at position 1006 (serine 1006) is a Phosphoserine.

Belongs to the glutamate-gated ion channel (TC 1.A.10.1) family. GRID2 subfamily. In terms of assembly, tetramer; dimer of dimers. Interacts with AP4M1. Interacts with EML2. Interacts with MAGI2 (via PDZ domains). Interacts with BECN1, GOPC, GRID2IP, SHANK1 and SHANK2. Interacts with CBLN2, but not with CBLN4. Interacts with CBLN1 (via C1q domain); the interaction is CBLN1-NRX1 complex formation-dependent; CBLN1-binding is calcium-independent; CBLN1 hexamers anchor GRID2 N-terminal domain dimers to monomeric NRXN1 isoform beta; promotes synaptogenesis and mediates the D-Serine-dependent long term depression signals and AMPA receptor endocytosis. In terms of tissue distribution, expressed at high levels in the cerebellar Purkinje cell layer, almost absent in the forebrain.

It localises to the postsynaptic cell membrane. The catalysed reaction is Ca(2+)(in) = Ca(2+)(out). It carries out the reaction Na(+)(in) = Na(+)(out). Member of the ionotropic glutamate receptor family, which plays a crucial role in synaptic organization and signal transduction in the central nervous system. Although it shares structural features with ionotropic glutamate receptors, does not bind glutamate as a primary ligand. Promotes synaptogenesis and mediates the D-Serine-dependent long term depression signals and AMPA receptor endocytosis of cerebellar parallel fiber-Purkinje cell (PF-PC) synapses through the NRX1B-CBLN1-GRID2 triad complex. In the presence of neurexins and cerebellins, forms cation-selective channels that are proposed to be gated by glycine and D-serine. However, recent research disputes this ligand-gated cation channel activity. Cation-selective ion channel activity can be triggered by GRM1 in Purkinje cells. The sequence is that of Glutamate receptor ionotropic, delta-2 (Grid2) from Rattus norvegicus (Rat).